The sequence spans 176 residues: MGRDICTLDNVYANNLGMLTKLAHVTVPNLYQDAFFSALFAEDSLVAKNKKPSSKKDVHFTQMAYYSEIPVGGLVAKLVPKKQNELSLKGIQIEFLGVLPNYRHKSIGSKLLKFAEDKCSECHQHNVFVYLPAVDDLTKQWFIAHGFEQVGETVNNFIKGVNGDEQDAILLKKHIS.

In terms of domain architecture, N-acetyltransferase spans 14–176; that stretch reads NNLGMLTKLA…DAILLKKHIS (163 aa).

It belongs to the acetyltransferase family. Component of the N-terminal acetyltransferase A (NatA) complex, which is composed of ARD1, NAT1 and NAT5.

It is found in the cytoplasm. It carries out the reaction N-terminal L-methionyl-L-alanyl-[protein] + acetyl-CoA = N-terminal N(alpha)-acetyl-L-methionyl-L-alanyl-[protein] + CoA + H(+). The enzyme catalyses N-terminal L-methionyl-L-seryl-[protein] + acetyl-CoA = N-terminal N(alpha)-acetyl-L-methionyl-L-seryl-[protein] + CoA + H(+). It catalyses the reaction N-terminal L-methionyl-L-valyl-[protein] + acetyl-CoA = N-terminal N(alpha)-acetyl-L-methionyl-L-valyl-[protein] + CoA + H(+). The catalysed reaction is N-terminal L-methionyl-L-threonyl-[protein] + acetyl-CoA = N-terminal N(alpha)-acetyl-L-methionyl-L-threonyl-[protein] + CoA + H(+). It carries out the reaction N-terminal L-methionyl-L-lysyl-[protein] + acetyl-CoA = N-terminal N(alpha)-acetyl-L-methionyl-L-lysyl-[protein] + CoA + H(+). The enzyme catalyses N-terminal L-methionyl-L-leucyl-[protein] + acetyl-CoA = N-terminal N(alpha)-acetyl-L-methionyl-L-leucyl-[protein] + CoA + H(+). It catalyses the reaction N-terminal L-methionyl-L-phenylalanyl-[protein] + acetyl-CoA = N-terminal N(alpha)-acetyl-L-methionyl-L-phenylalanyl-[protein] + CoA + H(+). The catalysed reaction is N-terminal L-methionyl-L-tyrosyl-[protein] + acetyl-CoA = N-terminal N(alpha)-acetyl-L-methionyl-L-tyrosyl-[protein] + CoA + H(+). N-alpha-acetyltransferase that acetylates the N-terminus of proteins that retain their initiating methionine. Has a broad substrate specificity: able to acetylate the initiator methionine of most peptides. Non-essential component of the NatA N-terminal acetyltransferase. This is N-alpha-acetyltransferase NAT5 from Saccharomyces cerevisiae (strain ATCC 204508 / S288c) (Baker's yeast).